A 428-amino-acid polypeptide reads, in one-letter code: uncharacterized protein (428 aa).

H68 contacts Zn(2+). The active-site Proton acceptor is E71. The Zn(2+) site is built by H72 and E143.

Belongs to the peptidase M16 family. Zn(2+) is required as a cofactor.

This is an uncharacterized protein from Bacillus subtilis (strain 168).